The sequence spans 487 residues: 2-aminomuconic semialdehyde dehydrogenase (487 aa).

231-236 contributes to the NAD(+) binding site; that stretch reads GSQPTA. E253 (proton acceptor) is an active-site residue. The Nucleophile role is filled by C287. At S362 the chain carries Phosphoserine.

The protein belongs to the aldehyde dehydrogenase family. Detected in hepatocytes and in proximal and distal convoluted tubules in kidney cortex (at protein level). Highly expressed in adult liver and in kidney cortex. First detected in embryonic liver after 15 days of development.

It is found in the cytoplasm. The enzyme catalyses 2-aminomuconate 6-semialdehyde + NAD(+) + H2O = (2Z,4E)-2-aminomuconate + NADH + 2 H(+). It functions in the pathway amino-acid degradation; L-kynurenine degradation. Catalyzes the NAD-dependent oxidation of 2-aminomuconic semialdehyde of the kynurenine metabolic pathway in L-tryptophan degradation. This chain is 2-aminomuconic semialdehyde dehydrogenase (Aldh8a1), found in Mus musculus (Mouse).